The primary structure comprises 259 residues: Zinc import ATP-binding protein ZnuC (259 aa).

The ABC transporter domain occupies 11–225 (IRLENIYVHR…PEYLAIFGGQ (215 aa)). 43–50 (GPNGAGKS) contacts ATP.

The protein belongs to the ABC transporter superfamily. Zinc importer (TC 3.A.1.15.5) family. The complex is composed of two ATP-binding proteins (ZnuC), two transmembrane proteins (ZnuB) and a solute-binding protein (ZnuA).

The protein localises to the cell inner membrane. The enzyme catalyses Zn(2+)(out) + ATP(in) + H2O(in) = Zn(2+)(in) + ADP(in) + phosphate(in) + H(+)(in). Part of the ABC transporter complex ZnuABC involved in zinc import. Responsible for energy coupling to the transport system. This chain is Zinc import ATP-binding protein ZnuC, found in Acinetobacter baylyi (strain ATCC 33305 / BD413 / ADP1).